The chain runs to 545 residues: Membrane protein insertase YidC (545 aa).

Residues 6 to 26 (LILFSALVLVLFLMWDAWQTD) form a helical membrane-spanning segment. The tract at residues 34 to 59 (PPPPQPTASSGESSPVLPEAVPDAPP) is disordered. The next 3 membrane-spanning stretches (helical) occupy residues 357 to 377 (LVGNWGWAIVLLTFVVKLVFF), 428 to 448 (GGCLPIVVQIPVFIALYWMLL), and 505 to 525 (PVMFTVFFVMFPAGLVLYWVV).

The protein belongs to the OXA1/ALB3/YidC family. Type 1 subfamily. As to quaternary structure, interacts with the Sec translocase complex via SecD. Specifically interacts with transmembrane segments of nascent integral membrane proteins during membrane integration.

The protein localises to the cell inner membrane. Required for the insertion and/or proper folding and/or complex formation of integral membrane proteins into the membrane. Involved in integration of membrane proteins that insert both dependently and independently of the Sec translocase complex, as well as at least some lipoproteins. Aids folding of multispanning membrane proteins. The protein is Membrane protein insertase YidC of Nitrosococcus oceani (strain ATCC 19707 / BCRC 17464 / JCM 30415 / NCIMB 11848 / C-107).